Here is a 336-residue protein sequence, read N- to C-terminus: Ferrochelatase (336 aa).

2 residues coordinate Fe cation: H206 and E287.

The protein belongs to the ferrochelatase family.

It localises to the cytoplasm. It carries out the reaction heme b + 2 H(+) = protoporphyrin IX + Fe(2+). It participates in porphyrin-containing compound metabolism; protoheme biosynthesis; protoheme from protoporphyrin-IX: step 1/1. Its function is as follows. Catalyzes the ferrous insertion into protoporphyrin IX. In Neisseria meningitidis serogroup B (strain ATCC BAA-335 / MC58), this protein is Ferrochelatase.